The sequence spans 206 residues: Casparian strip membrane protein 1 (206 aa).

Ala2 is modified (N-acetylalanine). At 2–43 (AKESTTIDVGEPSTVTKSSSHVVKDAKKKGFVAVASRGGAKR) the chain is on the cytoplasmic side. Residues 44-64 (GLAIFDFLLRLAAIAVTIGAA) traverse the membrane as a helical segment. Topologically, residues 65–95 (SVMYTAEETLPFFTQFLQFQAGYDDLPAFQY) are extracellular. A helical membrane pass occupies residues 96–116 (FVIAVAVVASYLVLSLPFSIV). The Cytoplasmic portion of the chain corresponds to 117 to 127 (SIVRPHAVAPR). A helical transmembrane segment spans residues 128 to 148 (LILLICDTLVVTLNTSAAAAA). Residues 149–180 (ASITYLAHNGNQSTNWLPICQQFGDFCQNVST) are Extracellular-facing. 2 N-linked (GlcNAc...) asparagine glycosylation sites follow: Asn159 and Asn177. Residues 181–201 (AVVADSIAILFFIVLIIISAI) form a helical membrane-spanning segment. At 202 to 206 (ALKRH) the chain is on the cytoplasmic side.

The protein belongs to the Casparian strip membrane proteins (CASP) family. As to quaternary structure, homodimer and heterodimers with other CASP proteins. Interacts with CASP2, CASP3, CASP4 and CASP5.

Its subcellular location is the cell membrane. Regulates membrane-cell wall junctions and localized cell wall deposition. Required for establishment of the Casparian strip membrane domain (CSD) and the subsequent formation of Casparian strips, a cell wall modification of the root endodermis that determines an apoplastic barrier between the intraorganismal apoplasm and the extraorganismal apoplasm and prevents lateral diffusion. This is Casparian strip membrane protein 1 (CASP1) from Arabidopsis thaliana (Mouse-ear cress).